The chain runs to 337 residues: uncharacterized protein (337 aa).

Belongs to the mimivirus R69 family.

This is an uncharacterized protein from Acanthamoeba polyphaga mimivirus (APMV).